The sequence spans 572 residues: Phosphoglucomutase-1 (572 aa).

Residues threonine 23, arginine 27, 126-127, and lysine 140 each bind substrate; that span reads SH. The active-site Phosphoserine intermediate is the serine 126. Serine 126 provides a ligand contact to Mg(2+). Mg(2+) is bound by residues aspartate 308, aspartate 310, and aspartate 312. Residues 312 to 313, threonine 373, 392 to 394, lysine 405, and arginine 527 each bind substrate; these read DR and EES.

This sequence belongs to the phosphohexose mutase family. It depends on Mg(2+) as a cofactor. Post-translationally, phosphorylated via a calcium-dependent protein kinase. Very rapidly (within 80 ms) dephosphorylated during triggered trichocyst exocytosis. In terms of processing, O-glycosylated with a short chain of mannose residues.

The protein localises to the cytoplasm. The enzyme catalyses alpha-D-glucose 1-phosphate = alpha-D-glucose 6-phosphate. In terms of biological role, may be involved in membrane fusion in exocytosis. The protein is Phosphoglucomutase-1 (pp63-1) of Paramecium tetraurelia.